The sequence spans 860 residues: Paladin (860 aa).

A disordered region spans residues 1–24; that stretch reads MGTTASAAPQATLHERLHSDSMTD. G2 carries N-myristoyl glycine lipidation. Over residues 13 to 24 the composition is skewed to basic and acidic residues; it reads LHERLHSDSMTD.

This sequence belongs to the paladin family.

It localises to the cytoplasm. The protein localises to the cytosol. This is Paladin (pald1) from Danio rerio (Zebrafish).